The following is a 375-amino-acid chain: 23S rRNA (uracil(747)-C(5))-methyltransferase RlmC (375 aa).

4 residues coordinate [4Fe-4S] cluster: Cys-3, Cys-11, Cys-14, and Cys-87. Residues Gln-212, Phe-241, Glu-262, and Asn-307 each contribute to the S-adenosyl-L-methionine site. Residue Cys-334 is the Nucleophile of the active site.

Belongs to the class I-like SAM-binding methyltransferase superfamily. RNA M5U methyltransferase family. RlmC subfamily.

The enzyme catalyses uridine(747) in 23S rRNA + S-adenosyl-L-methionine = 5-methyluridine(747) in 23S rRNA + S-adenosyl-L-homocysteine + H(+). Functionally, catalyzes the formation of 5-methyl-uridine at position 747 (m5U747) in 23S rRNA. The polypeptide is 23S rRNA (uracil(747)-C(5))-methyltransferase RlmC (Enterobacter sp. (strain 638)).